Consider the following 864-residue polypeptide: Alpha-glucosidase (864 aa).

The N-terminal stretch at 1-22 (MAKVSFIFVAIALITGNVLCQT) is a signal peptide. Asparagine 187, asparagine 364, and asparagine 406 each carry an N-linked (GlcNAc...) asparagine glycan. The active-site Nucleophile is aspartate 430. Residue glutamate 433 is part of the active site. 2 N-linked (GlcNAc...) asparagine glycosylation sites follow: asparagine 466 and asparagine 500. The Proton donor role is filled by aspartate 567. 2 N-linked (GlcNAc...) asparagine glycosylation sites follow: asparagine 568 and asparagine 734.

It belongs to the glycosyl hydrolase 31 family.

It carries out the reaction Hydrolysis of terminal, non-reducing (1-&gt;4)-linked alpha-D-glucose residues with release of alpha-D-glucose.. In terms of biological role, hydrolyzes not only malto-oligosaccharides but also soluble starch. This is Alpha-glucosidase from Mucor javanicus.